Here is an 828-residue protein sequence, read N- to C-terminus: DNA gyrase subunit A (828 aa).

The region spanning leucine 32 to leucine 497 is the Topo IIA-type catalytic domain. Tyrosine 120 serves as the catalytic O-(5'-phospho-DNA)-tyrosine intermediate. Residues glutamine 524–glycine 530 carry the GyrA-box motif.

It belongs to the type II topoisomerase GyrA/ParC subunit family. In terms of assembly, heterotetramer, composed of two GyrA and two GyrB chains. In the heterotetramer, GyrA contains the active site tyrosine that forms a transient covalent intermediate with DNA, while GyrB binds cofactors and catalyzes ATP hydrolysis.

The protein localises to the cytoplasm. It catalyses the reaction ATP-dependent breakage, passage and rejoining of double-stranded DNA.. Its function is as follows. A type II topoisomerase that negatively supercoils closed circular double-stranded (ds) DNA in an ATP-dependent manner to modulate DNA topology and maintain chromosomes in an underwound state. Negative supercoiling favors strand separation, and DNA replication, transcription, recombination and repair, all of which involve strand separation. Also able to catalyze the interconversion of other topological isomers of dsDNA rings, including catenanes and knotted rings. Type II topoisomerases break and join 2 DNA strands simultaneously in an ATP-dependent manner. This Streptococcus pyogenes serotype M3 (strain ATCC BAA-595 / MGAS315) protein is DNA gyrase subunit A.